The chain runs to 141 residues: Drosulfakinins (141 aa).

An N-terminal signal peptide occupies residues 1-33 (MGLRSCTHLATLFMTLWALAFCFLVVVPIPAQT). A propeptide spanning residues 34 to 73 (TSLQNAKDDRRLQELESKIGAESDQPNANLVGPSFSRFGD) is cleaved from the precursor. The disordered stretch occupies residues 51–72 (KIGAESDQPNANLVGPSFSRFG). Position 82 is a phenylalanine amide (Phe82). The propeptide occupies 86 to 111 (VPLISRPMIPIELDLLMDNDDERTKA). At Tyr117 the chain carries Sulfotyrosine. Position 122 is a phenylalanine amide (Phe122). Position 134 is a sulfotyrosine (Tyr134). Phe139 is modified (phenylalanine amide).

The protein belongs to the gastrin/cholecystokinin family.

The protein resides in the secreted. Drosulfakinin-0 (DSK 0) plays diverse biological roles including regulating gut muscle contraction in adults but not in larvae. The protein is Drosulfakinins of Drosophila mauritiana (Fruit fly).